Reading from the N-terminus, the 314-residue chain is Fructose-1,6-bisphosphatase class 1 (314 aa).

Mg(2+)-binding residues include Glu-91, Asp-112, Leu-114, and Asp-115. Substrate contacts are provided by residues 115-118, Tyr-223, and Lys-254; that span reads DGSS. Residue Glu-260 participates in Mg(2+) binding.

This sequence belongs to the FBPase class 1 family. In terms of assembly, homotetramer. It depends on Mg(2+) as a cofactor.

Its subcellular location is the cytoplasm. The catalysed reaction is beta-D-fructose 1,6-bisphosphate + H2O = beta-D-fructose 6-phosphate + phosphate. It participates in carbohydrate biosynthesis; gluconeogenesis. This is Fructose-1,6-bisphosphatase class 1 from Geobacter metallireducens (strain ATCC 53774 / DSM 7210 / GS-15).